Reading from the N-terminus, the 205-residue chain is Probable GTP-binding protein EngB (205 aa).

The region spanning 22–198 is the EngB-type G domain; sequence HLPEYAFIGR…LSYIDEVNQD (177 aa). GTP is bound by residues 30–37, 57–61, 75–78, 142–145, and 177–179; these read GRSNVGKS, GKTQL, DLPG, TKAD, and TSA. The Mg(2+) site is built by S37 and T59.

The protein belongs to the TRAFAC class TrmE-Era-EngA-EngB-Septin-like GTPase superfamily. EngB GTPase family. Mg(2+) serves as cofactor.

In terms of biological role, necessary for normal cell division and for the maintenance of normal septation. The chain is Probable GTP-binding protein EngB from Flavobacterium psychrophilum (strain ATCC 49511 / DSM 21280 / CIP 103535 / JIP02/86).